Here is a 148-residue protein sequence, read N- to C-terminus: Large ribosomal subunit protein uL15 (148 aa).

Basic and acidic residues predominate over residues 1 to 10 (MQLHNLEYKK). The disordered stretch occupies residues 1–42 (MQLHNLEYKKGSRNHKEKRVGRGHGSGLGKTSGRGQDGQKAR). Residues 11 to 22 (GSRNHKEKRVGR) are compositionally biased toward basic residues. The span at 23 to 36 (GHGSGLGKTSGRGQ) shows a compositional bias: gly residues.

This sequence belongs to the universal ribosomal protein uL15 family. Part of the 50S ribosomal subunit.

Functionally, binds to the 23S rRNA. The protein is Large ribosomal subunit protein uL15 of Ureaplasma parvum serovar 3 (strain ATCC 27815 / 27 / NCTC 11736).